A 104-amino-acid chain; its full sequence is Glutaredoxin 1 (104 aa).

The Glutaredoxin domain occupies 1 to 96; sequence MNKSILHTII…KLLETQPKNK (96 aa). Cysteines 17 and 20 form a disulfide.

Belongs to the glutaredoxin family. Monomer.

It localises to the cytoplasm. Has a glutathione-disulfide oxidoreductase activity in the presence of NADPH and glutathione reductase. Reduces low molecular weight disulfides and proteins. This is Glutaredoxin 1 (grxC1) from Rickettsia typhi (strain ATCC VR-144 / Wilmington).